The chain runs to 195 residues: dTDP-4-dehydrorhamnose 3,5-epimerase (195 aa).

Residues R31, E36, 54–56, and R67 each bind substrate; that span reads QDN. The active-site Proton acceptor is H70. The substrate site is built by K80 and H127. The active-site Proton donor is Y140. D151 and K176 together coordinate substrate.

The protein belongs to the dTDP-4-dehydrorhamnose 3,5-epimerase family. In terms of assembly, homodimer.

The enzyme catalyses dTDP-4-dehydro-6-deoxy-alpha-D-glucose = dTDP-4-dehydro-beta-L-rhamnose. The protein operates within carbohydrate biosynthesis; dTDP-L-rhamnose biosynthesis. Its function is as follows. Catalyzes the epimerization of the C3' and C5'positions of dTDP-6-deoxy-D-xylo-4-hexulose, forming dTDP-6-deoxy-L-lyxo-4-hexulose. This is dTDP-4-dehydrorhamnose 3,5-epimerase from Sinorhizobium fredii (strain NBRC 101917 / NGR234).